Consider the following 292-residue polypeptide: Phosphoribulokinase, plasmid (292 aa).

Position 12–20 (12–20) interacts with ATP; that stretch reads GSSGAGTTS.

Belongs to the phosphoribulokinase family. As to quaternary structure, homooctamer.

The catalysed reaction is D-ribulose 5-phosphate + ATP = D-ribulose 1,5-bisphosphate + ADP + H(+). The protein operates within carbohydrate biosynthesis; Calvin cycle. The chain is Phosphoribulokinase, plasmid (cfxP) from Cupriavidus necator (strain ATCC 17699 / DSM 428 / KCTC 22496 / NCIMB 10442 / H16 / Stanier 337) (Ralstonia eutropha).